The following is a 597-amino-acid chain: Elongation factor 4 (597 aa).

A tr-type G domain is found at 2-184 (KNIRNFSIIA…EVVNKIPPPK (183 aa)). GTP contacts are provided by residues 14-19 (DHGKST) and 131-134 (NKID).

The protein belongs to the TRAFAC class translation factor GTPase superfamily. Classic translation factor GTPase family. LepA subfamily.

The protein resides in the cell inner membrane. The catalysed reaction is GTP + H2O = GDP + phosphate + H(+). Required for accurate and efficient protein synthesis under certain stress conditions. May act as a fidelity factor of the translation reaction, by catalyzing a one-codon backward translocation of tRNAs on improperly translocated ribosomes. Back-translocation proceeds from a post-translocation (POST) complex to a pre-translocation (PRE) complex, thus giving elongation factor G a second chance to translocate the tRNAs correctly. Binds to ribosomes in a GTP-dependent manner. This Chromobacterium violaceum (strain ATCC 12472 / DSM 30191 / JCM 1249 / CCUG 213 / NBRC 12614 / NCIMB 9131 / NCTC 9757 / MK) protein is Elongation factor 4.